A 234-amino-acid polypeptide reads, in one-letter code: MTSVASLPEQSPGYRCRSLTGAGARTSAAGPLARLLPRRRLPPPHLPARPPGGWSRNQSHQRRGPGRCWGWGRGMTRICPLCPGAPEYINSAVSSQTLSQSCTPPQSPQPDPRPLSLRVGLALPGGRLGCGEAGSANRHWFSFLFPFIHFCWSPRAAAPGVAMNGWMPARWDHQVRRDVAGARGAPPAWGQAPSPRRSVGGPQKTLKRPKACSPRSPQHTPGVFSAPEKLGRKT.

2 disordered regions span residues 1-65 (MTSV…RRGP) and 182-234 (ARGA…GRKT).

This is an uncharacterized protein from Homo sapiens (Human).